Consider the following 76-residue polypeptide: U-scoloptoxin(15)-Ssd3b (76 aa).

Residues 1–23 (MEKKIIFLCFLVALLTFPEFISS) form the signal peptide.

Post-translationally, contains 2 disulfide bonds. In terms of tissue distribution, expressed by the venom gland.

It localises to the secreted. The sequence is that of U-scoloptoxin(15)-Ssd3b from Scolopendra dehaani (Thai centipede).